Reading from the N-terminus, the 157-residue chain is 6,7-dimethyl-8-ribityllumazine synthase (157 aa).

5-amino-6-(D-ribitylamino)uracil contacts are provided by residues Phe-24, 56 to 58 (SFE), and 79 to 81 (VLI). (2S)-2-hydroxy-3-oxobutyl phosphate is bound at residue 84–85 (ET). Residue His-87 is the Proton donor of the active site. Phe-112 lines the 5-amino-6-(D-ribitylamino)uracil pocket. Arg-126 is a binding site for (2S)-2-hydroxy-3-oxobutyl phosphate.

It belongs to the DMRL synthase family.

It carries out the reaction (2S)-2-hydroxy-3-oxobutyl phosphate + 5-amino-6-(D-ribitylamino)uracil = 6,7-dimethyl-8-(1-D-ribityl)lumazine + phosphate + 2 H2O + H(+). It participates in cofactor biosynthesis; riboflavin biosynthesis; riboflavin from 2-hydroxy-3-oxobutyl phosphate and 5-amino-6-(D-ribitylamino)uracil: step 1/2. Catalyzes the formation of 6,7-dimethyl-8-ribityllumazine by condensation of 5-amino-6-(D-ribitylamino)uracil with 3,4-dihydroxy-2-butanone 4-phosphate. This is the penultimate step in the biosynthesis of riboflavin. The polypeptide is 6,7-dimethyl-8-ribityllumazine synthase (Pyrococcus furiosus (strain ATCC 43587 / DSM 3638 / JCM 8422 / Vc1)).